The following is a 3411-amino-acid chain: Genome polyprotein (3411 aa).

At 1-104 (MSGRKAQGKT…LSSRKRRSHD (104 aa)) the chain is on the cytoplasmic side. The tract at residues 38 to 72 (PGPSRGVQGFISFFSFNILTGKKITAHLKRLWKML) is hydrophobic; homodimerization of capsid protein C. Positions 102 to 121 (SHDVLTVQFLILGMLLMAGG) are cleaved as a propeptide — ER anchor for the capsid protein C, removed in mature form by serine protease NS3. Residues 105-125 (VLTVQFLILGMLLMAGGVTLV) traverse the membrane as a helical segment. The Extracellular segment spans residues 126–244 (RKNRWLLLNV…GERQLQKIER (119 aa)). Residues asparagine 134 and asparagine 150 are each glycosylated (N-linked (GlcNAc...) asparagine; by host). The chain crosses the membrane as a helical span at residues 245–265 (WLVRNPFFAVTALAIAYLVGS). Residues 266–270 (NMTQR) are Cytoplasmic-facing. A helical transmembrane segment spans residues 271-285 (VVIALLVLAVGPAYS). Over 286–730 (AHCIGITDRD…TVFGSAFQGL (445 aa)) the chain is Extracellular. 8 disulfides stabilise this stretch: cysteine 288–cysteine 315, cysteine 345–cysteine 401, cysteine 345–cysteine 406, cysteine 359–cysteine 390, cysteine 377–cysteine 401, cysteine 377–cysteine 406, cysteine 467–cysteine 568, and cysteine 585–cysteine 615. The fusion peptide stretch occupies residues 383-396 (DRGWGNGCGLFGKG). The chain crosses the membrane as a helical span at residues 731–751 (FGGLSWITKVIMGAVLIWVGI). The Extracellular segment spans residues 752 to 757 (NTRNMT). The chain crosses the membrane as a helical span at residues 758–778 (MSMSMILVGVIMMFLSLGVGA). The Extracellular segment spans residues 779-1132 (DQGCAINFGK…LVRSWVTAGE (354 aa)). 6 disulfides stabilise this stretch: cysteine 782-cysteine 793, cysteine 833-cysteine 921, cysteine 957-cysteine 1002, cysteine 1058-cysteine 1107, cysteine 1069-cysteine 1091, and cysteine 1090-cysteine 1094. Residues asparagine 908 and asparagine 986 are each glycosylated (N-linked (GlcNAc...) asparagine; by host). A helical transmembrane segment spans residues 1133–1153 (IHAVPFGLVSMMIAMEVVLRK). Residues 1154–1201 (RQGPKQMLVGGMVLLGAMLVGQVTLLDLLKLTMAVGLHFHEMNNGGDA) are Cytoplasmic-facing. Residues 1202–1222 (MYMALIAAFSIRPGLLIGFGL) traverse the membrane as a helical segment. The Lumenal segment spans residues 1223-1287 (RTLWSPRERL…ILPLMALLTP (65 aa)). The chain crosses the membrane as a helical span at residues 1288 to 1308 (VTMAEVRLATMLLCAVVIIGV). At 1309–1355 (LHQNSKDTSMQKTIPLVALTLTSYLGLTQPFLGLCAFLATRIFGRRS) the chain is on the cytoplasmic side. Residues 1356–1376 (IPVNEALAAAGLVGVLAGLAF) traverse the membrane as a helical segment. Topologically, residues 1377–1378 (QE) are lumenal. Residues 1379–1399 (MENFLGPIAVGGILMMLVSVA) form a helical membrane-spanning segment. At 1400 to 1456 (GRVDGLELKKLGEVSWEEEAEISGSSARYDVALSEQGEFKLLSEEKVPWDQVVMTSL) the chain is on the cytoplasmic side. The segment at 1407 to 1446 (LKKLGEVSWEEEAEISGSSARYDVALSEQGEFKLLSEEKV) is interacts with and activates NS3 protease. Residues 1457–1477 (ALVGAAIHPSALLLVLAGWLF) constitute an intramembrane region (helical). The Cytoplasmic portion of the chain corresponds to 1478-2157 (HVKGARRSGD…RNALSMMPEA (680 aa)). The 181-residue stretch at 1485-1665 (SGDVLWDIPT…EVKEEGKEEL (181 aa)) folds into the Peptidase S7 domain. Catalysis depends on charge relay system; for serine protease NS3 activity residues histidine 1537, aspartate 1561, and serine 1622. In terms of domain architecture, Helicase ATP-binding spans 1669–1825 (PTMLKKGMTT…HSNGEIEDVQ (157 aa)). Positions 1673–1676 (KKGM) are important for RNA-binding. 1682-1689 (YHPGAGKT) contacts ATP. Residues 1773-1776 (DEAH) carry the DEAH box motif. Residues 1820 to 1997 (EIEDVQTDIP…VRGGMVAPLY (178 aa)) form the Helicase C-terminal domain. Lysine 1877 is modified (N6-acetyllysine; by host). The chain crosses the membrane as a helical span at residues 2158-2178 (MTIVMLFILAGLLTSGMVIFF). Over 2179–2186 (MSPKGISR) the chain is Lumenal. Residues 2187 to 2207 (MSMAMGTMAGCGYLMFLGGAK) constitute an intramembrane region (helical). Residues 2208–2209 (PT) lie on the Lumenal side of the membrane. A helical membrane pass occupies residues 2210 to 2230 (HISYIMLIFFVLMVVVIPEPG). The Cytoplasmic portion of the chain corresponds to 2231-2241 (QQRSIQDNQVA). A helical transmembrane segment spans residues 2242–2262 (YLIIGILTLVSVVAANELGML). The Lumenal portion of the chain corresponds to 2263–2293 (ERTKEDLFGKKNLIPSSASPWSWPDLDLKPG). The segment at residues 2294 to 2314 (AAWTVYVGIVTILSPMLHHWI) is an intramembrane region (helical). Topologically, residues 2315-2360 (KVEYGNLSLSGIAQSASVLSFMDKGIPFMKMNISVIILLVSGWNSI) are lumenal. The chain crosses the membrane as a helical span at residues 2361 to 2380 (TVMPLLCGIGCAMLHWTLIL). Topologically, residues 2381–2421 (PGIKAQQSKLPQRRVFHGVAKNPVVDGNPTVDIEEAPEMPA) are cytoplasmic. A helical transmembrane segment spans residues 2422 to 2442 (LYEKKLALYLLLALSLASVAM). At 2443-2445 (CRT) the chain is on the lumenal side. A helical membrane pass occupies residues 2446-2466 (PFSLAEGIVLASAALGPLIEG). The Cytoplasmic segment spans residues 2467-3411 (NTSLLWNGPM…DADLQPGELI (945 aa)). The 265-residue stretch at 2507-2771 (GRANGKTLGE…DVILPIGTRS (265 aa)) folds into the mRNA cap 0-1 NS5-type MT domain. Residue serine 2562 participates in S-adenosyl-L-methionine binding. Serine 2562 carries the phosphoserine modification. Residue lysine 2567 is the For 2'-O-MTase activity of the active site. Positions 2592, 2593, 2610, 2611, 2637, and 2638 each coordinate S-adenosyl-L-methionine. Aspartate 2652 (for 2'-O-MTase activity) is an active-site residue. Isoleucine 2653 lines the S-adenosyl-L-methionine pocket. Catalysis depends on for 2'-O-MTase activity residues lysine 2688 and glutamate 2724. Tyrosine 2726 contacts S-adenosyl-L-methionine. Positions 2878 to 2911 (RKIMKVVNRWLFRHLAREKNPRLCTKEEFIAKVR) match the Nuclear localization signal motif. 4 residues coordinate Zn(2+): glutamate 2945, histidine 2949, cysteine 2954, and cysteine 2957. A RdRp catalytic domain is found at 3035 to 3187 (GGFYADDTAG…RPIDDRFGMA (153 aa)). Zn(2+) contacts are provided by histidine 3222, cysteine 3238, and cysteine 3357.

This sequence in the N-terminal section; belongs to the class I-like SAM-binding methyltransferase superfamily. mRNA cap 0-1 NS5-type methyltransferase family. Homodimer. Interacts (via N-terminus) with host EXOC1 (via C-terminus); this interaction results in EXOC1 degradation through the proteasome degradation pathway. As to quaternary structure, forms heterodimers with envelope protein E in the endoplasmic reticulum and Golgi. In terms of assembly, homodimer; in the endoplasmic reticulum and Golgi. Interacts with protein prM. Interacts with non-structural protein 1. Homodimer; Homohexamer when secreted. Interacts with envelope protein E. As to quaternary structure, interacts (via N-terminus) with serine protease NS3. In terms of assembly, forms a heterodimer with serine protease NS3. May form homooligomers. Forms a heterodimer with NS2B. Interacts with non-structural protein 2A (via N-terminus). Interacts with NS4B. Interacts with unphosphorylated RNA-directed RNA polymerase NS5; this interaction stimulates RNA-directed RNA polymerase NS5 guanylyltransferase activity. NS3 interacts with host PDCD6IP; this interaction contributes to virion release. As to quaternary structure, interacts with serine protease NS3. In terms of assembly, homodimer. Interacts with host STAT2; this interaction prevents the establishment of cellular antiviral state. Interacts with serine protease NS3. Interacts with host TRIM23; this interaction leads to NS5 ubiquitination. In terms of processing, specific enzymatic cleavages in vivo yield mature proteins. The nascent capsid protein C contains a C-terminal hydrophobic domain that act as a signal sequence for translocation of prM into the lumen of the ER. Mature capsid protein C is cleaved at a site upstream of this hydrophobic domain by NS3. prM is cleaved in post-Golgi vesicles by a host furin, releasing the mature small envelope protein M, and peptide pr. Non-structural protein 2A-alpha, a C-terminally truncated form of non-structural protein 2A, results from partial cleavage by NS3. Specific enzymatic cleavages in vivo yield mature proteins peptide 2K acts as a signal sequence and is removed from the N-terminus of NS4B by the host signal peptidase in the ER lumen. Signal cleavage at the 2K-4B site requires a prior NS3 protease-mediated cleavage at the 4A-2K site. Post-translationally, cleaved in post-Golgi vesicles by a host furin, releasing the mature small envelope protein M, and peptide pr. This cleavage is incomplete as up to 30% of viral particles still carry uncleaved prM. N-glycosylated. In terms of processing, N-glycosylated. The excreted form is glycosylated and this is required for efficient secretion of the protein from infected cells. Post-translationally, polyubiquitinated; ubiquitination is probably mediated by host TRIM23 and is prerequisite for NS5-STAT2 interaction. NS5 is not ISGylated or sumoylated. Acetylated by host KAT5. Acetylation modulates NS3 RNA-binding and unwinding activities and plays an important positive role for viral replication. In terms of processing, phosphorylated on serines residues. This phosphorylation may trigger NS5 nuclear localization.

The protein localises to the virion. The protein resides in the host nucleus. It localises to the host cytoplasm. Its subcellular location is the host perinuclear region. It is found in the secreted. The protein localises to the virion membrane. The protein resides in the host endoplasmic reticulum membrane. The catalysed reaction is Selective hydrolysis of -Xaa-Xaa-|-Yaa- bonds in which each of the Xaa can be either Arg or Lys and Yaa can be either Ser or Ala.. The enzyme catalyses RNA(n) + a ribonucleoside 5'-triphosphate = RNA(n+1) + diphosphate. It catalyses the reaction a ribonucleoside 5'-triphosphate + H2O = a ribonucleoside 5'-diphosphate + phosphate + H(+). It carries out the reaction ATP + H2O = ADP + phosphate + H(+). The catalysed reaction is a 5'-end (5'-triphosphoguanosine)-ribonucleoside in mRNA + S-adenosyl-L-methionine = a 5'-end (N(7)-methyl 5'-triphosphoguanosine)-ribonucleoside in mRNA + S-adenosyl-L-homocysteine. The enzyme catalyses a 5'-end (N(7)-methyl 5'-triphosphoguanosine)-ribonucleoside in mRNA + S-adenosyl-L-methionine = a 5'-end (N(7)-methyl 5'-triphosphoguanosine)-(2'-O-methyl-ribonucleoside) in mRNA + S-adenosyl-L-homocysteine + H(+). Functionally, plays a role in virus budding by binding to the cell membrane and gathering the viral RNA into a nucleocapsid that forms the core of a mature virus particle. During virus entry, may induce genome penetration into the host cytoplasm after hemifusion induced by the surface proteins. Can migrate to the cell nucleus where it modulates host functions. In terms of biological role, inhibits RNA silencing by interfering with host Dicer. Its function is as follows. Prevents premature fusion activity of envelope proteins in trans-Golgi by binding to envelope protein E at pH6.0. After virion release in extracellular space, gets dissociated from E dimers. Acts as a chaperone for envelope protein E during intracellular virion assembly by masking and inactivating envelope protein E fusion peptide. prM is the only viral peptide matured by host furin in the trans-Golgi network probably to avoid catastrophic activation of the viral fusion activity in acidic Golgi compartment prior to virion release. prM-E cleavage is inefficient, and many virions are only partially matured. These uncleaved prM would play a role in immune evasion. Functionally, may play a role in virus budding. Exerts cytotoxic effects by activating a mitochondrial apoptotic pathway through M ectodomain. May display a viroporin activity. In terms of biological role, binds to host cell surface receptor and mediates fusion between viral and cellular membranes. Envelope protein is synthesized in the endoplasmic reticulum in the form of heterodimer with protein prM. They play a role in virion budding in the ER, and the newly formed immature particle is covered with 60 spikes composed of heterodimer between precursor prM and envelope protein E. The virion is transported to the Golgi apparatus where the low pH causes dissociation of PrM-E heterodimers and formation of E homodimers. prM-E cleavage is inefficient, and many virions are only partially matured. These uncleaved prM would play a role in immune evasion. Its function is as follows. Involved in immune evasion, pathogenesis and viral replication. Once cleaved off the polyprotein, is targeted to three destinations: the viral replication cycle, the plasma membrane and the extracellular compartment. Essential for viral replication. Required for formation of the replication complex and recruitment of other non-structural proteins to the ER-derived membrane structures. Excreted as a hexameric lipoparticle that plays a role against host immune response. Antagonizing the complement function. Binds to the host macrophages and dendritic cells. Inhibits signal transduction originating from Toll-like receptor 3 (TLR3). Component of the viral RNA replication complex that functions in virion assembly and antagonizes the host immune response. Functionally, required cofactor for the serine protease function of NS3. May have membrane-destabilizing activity and form viroporins. In terms of biological role, displays three enzymatic activities: serine protease, NTPase and RNA helicase. NS3 serine protease, in association with NS2B, performs its autocleavage and cleaves the polyprotein at dibasic sites in the cytoplasm: C-prM, NS2A-NS2B, NS2B-NS3, NS3-NS4A, NS4A-2K and NS4B-NS5. NS3 RNA helicase binds RNA and unwinds dsRNA in the 3' to 5' direction. Also plays a role in virus assembly. Its function is as follows. Regulates the ATPase activity of the NS3 helicase activity. NS4A allows NS3 helicase to conserve energy during unwinding. Functions as a signal peptide for NS4B and is required for the interferon antagonism activity of the latter. Functionally, induces the formation of ER-derived membrane vesicles where the viral replication takes place. Inhibits interferon (IFN)-induced host STAT1 phosphorylation and nuclear translocation, thereby preventing the establishment of cellular antiviral state by blocking the IFN-alpha/beta pathway. In terms of biological role, replicates the viral (+) and (-) RNA genome, and performs the capping of genomes in the cytoplasm. NS5 methylates viral RNA cap at guanine N-7 and ribose 2'-O positions. Besides its role in RNA genome replication, also prevents the establishment of cellular antiviral state by blocking the interferon-alpha/beta (IFN-alpha/beta) signaling pathway. IFN-I induces binding of NS5 to host IFN-activated transcription factor STAT2, preventing its transcriptional activity. Host TRIM23 is the E3 ligase that interacts with and polyubiquitinates NS5 to promote its binding to STAT2 and trigger IFN-I signaling inhibition. The polypeptide is Genome polyprotein (Yellow fever virus (isolate Ivory Coast/85-82H/1982) (YFV)).